We begin with the raw amino-acid sequence, 123 residues long: Probable histone H2B 3 (123 aa).

A disordered region spans residues 1-31 (MAPPKPSAKGAKKAAKTVSKPKDGKKRKHAR). S110 is a glycosylation site (O-linked (GlcNAc) serine). Residue K118 forms a Glycyl lysine isopeptide (Lys-Gly) (interchain with G-Cter in ubiquitin) linkage.

This sequence belongs to the histone H2B family. In terms of assembly, the nucleosome is a histone octamer containing two molecules each of H2A, H2B, H3 and H4 assembled in one H3-H4 heterotetramer and two H2A-H2B heterodimers. The octamer wraps approximately 147 bp of DNA. In terms of processing, monoubiquitination of Lys-118 gives a specific tag for epigenetic transcriptional activation and is also prerequisite for histone H3 'Lys-4' and 'Lys-79' methylation. Post-translationally, glcNAcylation at Ser-110 promotes monoubiquitination of Lys-118. It fluctuates in response to extracellular glucose, and associates with transcribed genes.

The protein resides in the nucleus. The protein localises to the chromosome. In terms of biological role, core component of nucleosome. Nucleosomes wrap and compact DNA into chromatin, limiting DNA accessibility to the cellular machineries which require DNA as a template. Histones thereby play a central role in transcription regulation, DNA repair, DNA replication and chromosomal stability. DNA accessibility is regulated via a complex set of post-translational modifications of histones, also called histone code, and nucleosome remodeling. In Caenorhabditis elegans, this protein is Probable histone H2B 3 (his-41).